We begin with the raw amino-acid sequence, 62 residues long: Photosystem II reaction center protein Z (62 aa).

The next 2 helical transmembrane spans lie at 8-28 (LVLLLIALSTVLVVGVPVVLA) and 41-61 (YTGAGLWTGLVIVTSLVNSLV).

Belongs to the PsbZ family. PSII is composed of 1 copy each of membrane proteins PsbA, PsbB, PsbC, PsbD, PsbE, PsbF, PsbH, PsbI, PsbJ, PsbK, PsbL, PsbM, PsbT, PsbX, PsbY, PsbZ, Psb30/Ycf12, at least 3 peripheral proteins of the oxygen-evolving complex and a large number of cofactors. It forms dimeric complexes.

The protein localises to the plastid. The protein resides in the chloroplast thylakoid membrane. May control the interaction of photosystem II (PSII) cores with the light-harvesting antenna, regulates electron flow through the 2 photosystem reaction centers. PSII is a light-driven water plastoquinone oxidoreductase, using light energy to abstract electrons from H(2)O, generating a proton gradient subsequently used for ATP formation. The polypeptide is Photosystem II reaction center protein Z (Pyropia yezoensis (Susabi-nori)).